Reading from the N-terminus, the 385-residue chain is T-box transcription factor TBX10 (385 aa).

A DNA-binding region (T-box) is located at residues 69–252 (LEMKPLWEEF…SNPFAKGFRE (184 aa)). 2 disordered regions span residues 283–310 (GSAE…NQLL) and 328–359 (QNLY…AGDQ). Positions 293–307 (KASASSSRTPTQPHN) are enriched in polar residues. Over residues 331-347 (YPGSPSRAGPPRARLAP) the composition is skewed to low complexity.

The protein resides in the nucleus. Its function is as follows. Probable transcriptional regulator involved in developmental processes. This chain is T-box transcription factor TBX10 (Tbx10), found in Mus musculus (Mouse).